Reading from the N-terminus, the 172-residue chain is Large ribosomal subunit protein uL22y (172 aa).

It belongs to the universal ribosomal protein uL22 family.

The chain is Large ribosomal subunit protein uL22y from Hordeum vulgare (Barley).